Here is a 478-residue protein sequence, read N- to C-terminus: Siroheme synthase (478 aa).

The tract at residues 1-207 is precorrin-2 dehydrogenase /sirohydrochlorin ferrochelatase; the sequence is MTANVLFPLF…QRHAEAEAVL (207 aa). NAD(+)-binding positions include 25–26 and 46–47; these read KV and PS. A Phosphoserine modification is found at S132. The tract at residues 220-478 is uroporphyrinogen-III C-methyltransferase; that stretch reads GSVTLVGAGA…PCPPRTHPIS (259 aa). D252 (proton acceptor) is an active-site residue. K274 functions as the Proton donor in the catalytic mechanism. S-adenosyl-L-methionine is bound by residues 305–307, V310, 335–336, M387, and G416; these read GGD and TA.

It in the N-terminal section; belongs to the precorrin-2 dehydrogenase / sirohydrochlorin ferrochelatase family. In the C-terminal section; belongs to the precorrin methyltransferase family.

The catalysed reaction is uroporphyrinogen III + 2 S-adenosyl-L-methionine = precorrin-2 + 2 S-adenosyl-L-homocysteine + H(+). It carries out the reaction precorrin-2 + NAD(+) = sirohydrochlorin + NADH + 2 H(+). The enzyme catalyses siroheme + 2 H(+) = sirohydrochlorin + Fe(2+). The protein operates within cofactor biosynthesis; adenosylcobalamin biosynthesis; precorrin-2 from uroporphyrinogen III: step 1/1. It functions in the pathway cofactor biosynthesis; adenosylcobalamin biosynthesis; sirohydrochlorin from precorrin-2: step 1/1. It participates in porphyrin-containing compound metabolism; siroheme biosynthesis; precorrin-2 from uroporphyrinogen III: step 1/1. Its pathway is porphyrin-containing compound metabolism; siroheme biosynthesis; siroheme from sirohydrochlorin: step 1/1. The protein operates within porphyrin-containing compound metabolism; siroheme biosynthesis; sirohydrochlorin from precorrin-2: step 1/1. Functionally, multifunctional enzyme that catalyzes the SAM-dependent methylations of uroporphyrinogen III at position C-2 and C-7 to form precorrin-2 via precorrin-1. Then it catalyzes the NAD-dependent ring dehydrogenation of precorrin-2 to yield sirohydrochlorin. Finally, it catalyzes the ferrochelation of sirohydrochlorin to yield siroheme. The protein is Siroheme synthase of Xylella fastidiosa (strain M23).